The following is a 200-amino-acid chain: ATP synthase subunit s, mitochondrial (200 aa).

A mitochondrion-targeting transit peptide spans 1–25 (MMLFGKISQQLCGVKKLPWSCDSRY). The segment at 1-61 (MMLFGKISQQ…SEWLLRCGAM (61 aa)) is N-terminal domain. A Mg(2+)-binding site is contributed by G59. LRR repeat units lie at residues 62-87 (VRYHGQERWQKDYNHLPTGPLDKYKI), 88-116 (QAIDATDSCIMSIGFDHMEGLEHVEKIRL), 117-141 (CKCHYIEDDCLLRLSQLENLQKTIL), and 142-173 (EMEIISCGNITDKGIIALLHLRNLKYLLLSDL). Position 93 (T93) interacts with Mg(2+).

The protein belongs to the ATP synthase subunit s family. In terms of assembly, homotetramer. Associates with ATP synthase.

The protein localises to the mitochondrion. It localises to the mitochondrion inner membrane. Involved in regulation of mitochondrial membrane ATP synthase. Necessary for H(+) conduction of ATP synthase. Facilitates energy-driven catalysis of ATP synthesis by blocking a proton leak through an alternative proton exit pathway. In Pongo abelii (Sumatran orangutan), this protein is ATP synthase subunit s, mitochondrial (DMAC2L).